Reading from the N-terminus, the 533-residue chain is DELLA protein 2 (533 aa).

The span at 1-12 shows a compositional bias: basic and acidic residues; the sequence is MKREHKLEHEDM. A disordered region spans residues 1-24; the sequence is MKREHKLEHEDMSSGSGKSGVCWE. The short motif at 31 to 35 is the DELLA motif element; the sequence is DELLA. The GRAS domain occupies 157–522; that stretch reads VETQEKGIRL…RPLIATSAWK (366 aa). The segment at 164–218 is leucine repeat I (LRI); that stretch reads IRLVHSLMACAEAVEQNNLKMAEALVKQIGYLAVSQEGAMRKVATYFAEGLARRI. Positions 166 to 203 are required for possible homodimerization; the sequence is LVHSLMACAEAVEQNNLKMAEALVKQIGYLAVSQEGAM. The short motif at 171 to 175 is the LxCxE motif; degenerate element; the sequence is MACAE. The VHIID stretch occupies residues 232-297; that stretch reads QIHFYETCPN…GGPPAFRLTG (66 aa). Residues 263–267 carry the VHIID motif; that stretch reads VHVID. Positions 311 to 343 are leucine repeat II (LRII); the sequence is QVGWRLAQFAQTIHVQFEYRGFVANSLADLDAS. The segment at 355-443 is PFYRE; the sequence is VAVNSVFELH…EVYLGKQICN (89 aa). The short motif at 363–367 is the LXXLL motif; degenerate element; the sequence is LHKLN. An SAW region spans residues 446-522; sequence ACEGTDRVER…RPLIATSAWK (77 aa).

It belongs to the GRAS family. DELLA subfamily. In terms of assembly, may be a homodimer. Post-translationally, ubiquitinated. Upon GA application it is ubiquitinated, leading to its subsequent degradation.

It is found in the nucleus. Its function is as follows. Probable transcriptional regulator that acts as a repressor of the gibberellin (GA) signaling pathway. Probably acts by participating in large multiprotein complexes that repress transcription of GA-inducible genes. Upon GA application, it is degraded by the proteasome, allowing the GA signaling pathway. Together with DELLA1, required to enable arbuscule development during arbuscular mycorrhizal (AM) symbiosis with AM fungi (e.g. Glomus versiforme) via the regulation of RAM1 which, in turn, regulates various AM genes (e.g. NSP1, NSP2, PT4, LEC5, RAM2, EXO70I, STR and RAD1). The sequence is that of DELLA protein 2 from Medicago truncatula (Barrel medic).